The primary structure comprises 33 residues: Brevinin-2LT (33 aa).

A disulfide bond links C27 and C33.

In terms of tissue distribution, expressed by the skin glands.

It localises to the secreted. In terms of biological role, has antibacterial activity. The chain is Brevinin-2LT from Rana latastei (Italian agile frog).